A 226-amino-acid polypeptide reads, in one-letter code: Enolase-phosphatase E1 (226 aa).

It belongs to the HAD-like hydrolase superfamily. MasA/MtnC family. In terms of assembly, monomer. Mg(2+) serves as cofactor.

The catalysed reaction is 5-methylsulfanyl-2,3-dioxopentyl phosphate + H2O = 1,2-dihydroxy-5-(methylsulfanyl)pent-1-en-3-one + phosphate. It participates in amino-acid biosynthesis; L-methionine biosynthesis via salvage pathway; L-methionine from S-methyl-5-thio-alpha-D-ribose 1-phosphate: step 3/6. Its pathway is amino-acid biosynthesis; L-methionine biosynthesis via salvage pathway; L-methionine from S-methyl-5-thio-alpha-D-ribose 1-phosphate: step 4/6. Functionally, bifunctional enzyme that catalyzes the enolization of 2,3-diketo-5-methylthiopentyl-1-phosphate (DK-MTP-1-P) into the intermediate 2-hydroxy-3-keto-5-methylthiopentenyl-1-phosphate (HK-MTPenyl-1-P), which is then dephosphorylated to form the acireductone 1,2-dihydroxy-3-keto-5-methylthiopentene (DHK-MTPene). This chain is Enolase-phosphatase E1, found in Shewanella pealeana (strain ATCC 700345 / ANG-SQ1).